The sequence spans 47 residues: Ribosome-inactivating protein luffin P1 (47 aa).

Cystine bridges form between Cys12–Cys33 and Cys16–Cys29.

In terms of assembly, homotetramer.

It carries out the reaction Endohydrolysis of the N-glycosidic bond at one specific adenosine on the 28S rRNA.. In terms of biological role, inhibits protein synthesis in animal cells. The chain is Ribosome-inactivating protein luffin P1 from Luffa aegyptiaca (Sponge gourd).